A 298-amino-acid chain; its full sequence is uncharacterized protein (298 aa).

A run of 10 helical transmembrane segments spans residues 5 to 23 (ILVSLLASFLFGYMYYFST), 33 to 52 (IFGYRMIFTFPFVLLSVTLF), 72 to 91 (ALSYLLCGLLMGFQMWLFLW), 101 to 120 (VSFGYLLLPIVMVAAGRVFF), 127 to 145 (FKFIAVIIATLGVISNIVL), 149 to 166 (LSWEAIVICLGYTAYFSI), 175 to 194 (LASFCLEMLSLMPVSIYFAL), 207 to 229 (FIWGXLVLLGLISGTALIAYVIA), 238 to 260 (LGLLGYVETIMMLCVSFLIGEQI), and 265 to 284 (YPLFICLVIAMILVMVDGVY). Residues 13 to 144 (FLFGYMYYFS…ATLGVISNIV (132 aa)) form the EamA domain.

The protein belongs to the EamA transporter family.

The protein localises to the cell membrane. This is an uncharacterized protein from Haemophilus influenzae (strain ATCC 51907 / DSM 11121 / KW20 / Rd).